A 271-amino-acid chain; its full sequence is Indole-3-glycerol phosphate synthase (271 aa).

This sequence belongs to the TrpC family.

It catalyses the reaction 1-(2-carboxyphenylamino)-1-deoxy-D-ribulose 5-phosphate + H(+) = (1S,2R)-1-C-(indol-3-yl)glycerol 3-phosphate + CO2 + H2O. Its pathway is amino-acid biosynthesis; L-tryptophan biosynthesis; L-tryptophan from chorismate: step 4/5. The sequence is that of Indole-3-glycerol phosphate synthase from Haloarcula marismortui (strain ATCC 43049 / DSM 3752 / JCM 8966 / VKM B-1809) (Halobacterium marismortui).